A 228-amino-acid polypeptide reads, in one-letter code: 7-cyano-7-deazaguanine synthase (228 aa).

ATP is bound at residue 10–20; sequence FSGGQDSTTLA. Zn(2+)-binding residues include C190, C205, C208, and C211.

This sequence belongs to the QueC family. It depends on Zn(2+) as a cofactor.

The enzyme catalyses 7-carboxy-7-deazaguanine + NH4(+) + ATP = 7-cyano-7-deazaguanine + ADP + phosphate + H2O + H(+). The protein operates within purine metabolism; 7-cyano-7-deazaguanine biosynthesis. Its function is as follows. Catalyzes the ATP-dependent conversion of 7-carboxy-7-deazaguanine (CDG) to 7-cyano-7-deazaguanine (preQ(0)). The chain is 7-cyano-7-deazaguanine synthase from Helicobacter pylori (strain P12).